A 139-amino-acid chain; its full sequence is Insulin-like growth factor (139 aa).

The first 38 residues, 1 to 38 (YIRRVRQGSIYSLLVESQQWCKLTLTLLLLLALLTRCT), serve as a signal peptide directing secretion. The tract at residues 39–67 (LSETLCGSELVDTLQFVCDDRGFFFVPQH) is b. Residues 68–82 (VPPRRGAHRRSRARK) are c. The a stretch occupies residues 83–103 (GIVEECCFKGCSLRLLEMYCA). Residues 104–113 (RPSKAERDVA) are d. Residues 108–139 (AERDVARPRQRPHRASQHSRRGSQSRGRGRSR) are disordered. The e stretch occupies residues 114–139 (RPRQRPHRASQHSRRGSQSRGRGRSR). The segment covering 115–139 (PRQRPHRASQHSRRGSQSRGRGRSR) has biased composition (basic residues).

The protein belongs to the insulin family.

It localises to the secreted. Its function is as follows. The insulin-like growth factors, isolated from plasma, are structurally and functionally related to insulin but have a much higher growth-promoting activity. The chain is Insulin-like growth factor from Myxine glutinosa (Atlantic hagfish).